A 160-amino-acid polypeptide reads, in one-letter code: 6,7-dimethyl-8-ribityllumazine synthase (160 aa).

Residues tryptophan 27, 59 to 61, and 81 to 83 each bind 5-amino-6-(D-ribitylamino)uracil; these read AIE and VVI. Position 86–87 (86–87) interacts with (2S)-2-hydroxy-3-oxobutyl phosphate; it reads QT. The Proton donor role is filled by histidine 89. Asparagine 114 provides a ligand contact to 5-amino-6-(D-ribitylamino)uracil. Arginine 128 is a binding site for (2S)-2-hydroxy-3-oxobutyl phosphate.

Belongs to the DMRL synthase family. In terms of assembly, homopentamer.

The enzyme catalyses (2S)-2-hydroxy-3-oxobutyl phosphate + 5-amino-6-(D-ribitylamino)uracil = 6,7-dimethyl-8-(1-D-ribityl)lumazine + phosphate + 2 H2O + H(+). It participates in cofactor biosynthesis; riboflavin biosynthesis; riboflavin from 2-hydroxy-3-oxobutyl phosphate and 5-amino-6-(D-ribitylamino)uracil: step 1/2. In terms of biological role, catalyzes the formation of 6,7-dimethyl-8-ribityllumazine by condensation of 5-amino-6-(D-ribitylamino)uracil with 3,4-dihydroxy-2-butanone 4-phosphate. This is the penultimate step in the biosynthesis of riboflavin. The polypeptide is 6,7-dimethyl-8-ribityllumazine synthase (Mycobacterium avium (strain 104)).